The following is a 273-amino-acid chain: 3-keto-5-aminohexanoate cleavage enzyme (273 aa).

Glutamate 14 is a (5S)-5-amino-3-oxohexanoate binding site. 2 residues coordinate Zn(2+): histidine 46 and histidine 48. 3 residues coordinate (5S)-5-amino-3-oxohexanoate: serine 82, glycine 85, and serine 106. Zn(2+) is bound at residue glutamate 227.

The protein belongs to the BKACE family. Kce subfamily. Homotetramer. Zn(2+) serves as cofactor.

The enzyme catalyses (5S)-5-amino-3-oxohexanoate + acetyl-CoA = (3S)-3-aminobutanoyl-CoA + acetoacetate. Its pathway is amino-acid degradation; L-lysine degradation via acetate pathway. Its function is as follows. Involved in the anaerobic fermentation of lysine. Catalyzes the reversible reaction between 3-keto-5-aminohexanoate (KAH) and acetyl-CoA to form 3-aminobutyryl-CoA and acetoacetate. The reaction involves the deprotonation of KAH, the nucleophilic addition onto acetyl-CoA and the intramolecular transfer of the CoA moiety. This chain is 3-keto-5-aminohexanoate cleavage enzyme, found in Acetoanaerobium sticklandii (strain ATCC 12662 / DSM 519 / JCM 1433 / CCUG 9281 / NCIMB 10654 / HF) (Clostridium sticklandii).